The following is a 1186-amino-acid chain: Pumilio homolog 1 (1186 aa).

An N-acetylserine modification is found at serine 2. The residue at position 19 (serine 19) is a Phosphoserine. The disordered stretch occupies residues 22–73 (LKHHPQEPANPNMPVVLTSGTGSQAQPQPAANQALAAGTHSSPVPGSIGVAG). Residues 45–58 (QAQPQPAANQALAA) are compositionally biased toward low complexity. Phosphoserine is present on residues serine 75, serine 98, and serine 106. Position 112 is a phosphothreonine (threonine 112). Serine 124, serine 159, serine 197, serine 209, and serine 229 each carry phosphoserine. The interval 233-272 (SCLRKGGFGPRDADSDENDKGEKKNKGTFDGDKLGDLKEE) is disordered. Positions 250 to 272 (NDKGEKKNKGTFDGDKLGDLKEE) are enriched in basic and acidic residues. Serine 305 is subject to Phosphoserine. Low complexity predominate over residues 485–502 (TNSANQQTTPQAQQGQQQ). Disordered regions lie at residues 485–524 (TNSA…GQQT) and 613–648 (AGTT…FYGN). Residues 511 to 524 (RPLTPNQNQQGQQT) are compositionally biased toward polar residues. Threonine 514 is modified (phosphothreonine). Over residues 626–639 (QQPQPQPQQQPNNN) the composition is skewed to low complexity. Phosphoserine is present on residues serine 709 and serine 714. Residues 742 to 773 (GPVGMPLPSQGPGHSQTPPPSLSSHGSSSSLN) form a disordered region. Residues 763-773 (LSSHGSSSSLN) show a composition bias toward low complexity. Arginine 796 bears the Omega-N-methylarginine mark. Residues serine 806 and serine 822 each carry the phosphoserine modification. Residues 828 to 1168 (GRSRLLEDFR…HILAKLEKYY (341 aa)) enclose the PUM-HD domain. 8 Pumilio repeats span residues 848 to 883 (EIAG…LVFN), 884 to 919 (EILQ…ALAE), 920 to 955 (RIRG…EMVR), 956 to 991 (ELDG…FIID), 992 to 1027 (AFKG…PILE), 1028 to 1063 (ELHQ…KIVA), 1064 to 1099 (EIRG…VLID), and 1103 to 1142 (TMND…IVMH). The interval 863 to 867 (SRFIQ) is adenine-nucleotide binding in RNA target. The interval 899–903 (NYVIQ) is uracil-nucleotide binding in RNA target. Residues 935-939 (CRVIQ) form an adenine-nucleotide binding in RNA target region. The tract at residues 971 to 975 (NHVVQ) is non-specific-nucleotide binding in RNA target. An adenine-nucleotide binding in RNA target region spans residues 1007–1011 (CRVIQ). Residues 1043-1047 (NYVIQ) are uracil-nucleotide binding in RNA target. The interval 1079–1083 (SNVVE) is guanine-nucleotide binding in RNA target. The interval 1122 to 1126 (NYVVQ) is uracil-nucleotide binding in RNA target.

As to quaternary structure, recruits the CCR4-POP2-NOT deadenylase leading to translational inhibition and mRNA degradation. In case of viral infection, interacts with DHX58. Interacts with TRIM71 (via NHL repeats) in an RNA-dependent manner. In terms of processing, phosphorylation at Ser-714 promotes RNA-binding activity. Following growth factor stimulation phosphorylated at Ser-714, promoting binding to the 3'-UTR of CDKN1B/p27 mRNA. As to expression, expressed in brain, heart, kidney, muscle, intestine and stomach. Not expressed in cerebellum, corpus callosum, caudate nucleus, hippocampus, medulla oblongata and putamen. Expressed in all fetal tissues tested.

It localises to the cytoplasm. It is found in the P-body. The protein resides in the cytoplasmic granule. Its function is as follows. Sequence-specific RNA-binding protein that acts as a post-transcriptional repressor by binding the 3'-UTR of mRNA targets. Binds to an RNA consensus sequence, the Pumilio Response Element (PRE), 5'-UGUANAUA-3', that is related to the Nanos Response Element (NRE). Mediates post-transcriptional repression of transcripts via different mechanisms: acts via direct recruitment of the CCR4-POP2-NOT deadenylase leading to translational inhibition and mRNA degradation. Also mediates deadenylation-independent repression by promoting accessibility of miRNAs. Following growth factor stimulation, phosphorylated and binds to the 3'-UTR of CDKN1B/p27 mRNA, inducing a local conformational change that exposes miRNA-binding sites, promoting association of miR-221 and miR-222, efficient suppression of CDKN1B/p27 expression, and rapid entry to the cell cycle. Acts as a post-transcriptional repressor of E2F3 mRNAs by binding to its 3'-UTR and facilitating miRNA regulation. Represses a program of genes necessary to maintain genomic stability such as key mitotic, DNA repair and DNA replication factors. Its ability to repress those target mRNAs is regulated by the lncRNA NORAD (non-coding RNA activated by DNA damage) which, due to its high abundance and multitude of PUMILIO binding sites, is able to sequester a significant fraction of PUM1 and PUM2 in the cytoplasm. Involved in neuronal functions by regulating ATXN1 mRNA levels: acts by binding to the 3'-UTR of ATXN1 transcripts, leading to their down-regulation independently of the miRNA machinery. Plays a role in cytoplasmic sensing of viral infection. In testis, acts as a post-transcriptional regulator of spermatogenesis by binding to the 3'-UTR of mRNAs coding for regulators of p53/TP53. Involved in embryonic stem cell renewal by facilitating the exit from the ground state: acts by targeting mRNAs coding for naive pluripotency transcription factors and accelerates their down-regulation at the onset of differentiation. Binds specifically to miRNA MIR199A precursor, with PUM2, regulates miRNA MIR199A expression at a postranscriptional level. The polypeptide is Pumilio homolog 1 (Homo sapiens (Human)).